We begin with the raw amino-acid sequence, 400 residues long: MSYQFEKNKLYAYLGEELVEALKRNEAIIAGGAITSLFNNKEINDVDIYFRSDKKACSFLEECWNSNVYVTSHTKKATLFIKKRLKLQMIHFKFFSDAESIFNTFDFTVCMGAFDFKTEAFTLHEDFLKHNSQRILKFNSQTAFPIVSLLRVQKYTDKEYTISKPEFIRIVLTCMDLTINTYEELKDQMGGMYGINYDKLFEDEKDEDFNLREAVDKIADMVLDEDYFKEPVNLEFNDLDDLLNDINKSPVMTLKINDDQYRIGLDGFLKESVSAPCTEIKLDTKDFFDKTNFYKFVRKQNGKLTSFYDKNFEYVIGEEAKAEGVIDSWSNSGKLFFNEKAAIEQSTYYGKEDGVLIEVKIKEKDFVDADNGKVEATACQVIREVSKDEWKEYISANNSK.

In terms of biological role, counteracts the host Gabija antiviral defense system. Probable nucleotidyltransferase. This is Gabija anti-defense 2 from Bacillus phage SPbetaL7.